A 396-amino-acid chain; its full sequence is Interactor of constitutive active ROPs 5 (396 aa).

Disordered regions lie at residues 1-49 (MQTP…TQIP) and 99-122 (ALKREAQEEAEDAKHQLMDINASE). 2 coiled-coil regions span residues 67–124 (KKRT…SEDS) and 158–366 (LSSA…TAAS). The span at 99–115 (ALKREAQEEAEDAKHQL) shows a compositional bias: basic and acidic residues.

It belongs to the ICR family. As to quaternary structure, component of the active ARAC10-IRC5-KIN13A complex. Homooligomer. Interacts (via C-terminus) with ARAC4, ARAC10, ARAC11 and (via N-terminus) with KIN13A (via C-terminus), but no interactions with SEC3A. Expressed in xylem cells in the roots and in stamens, petals and pollen.

Its subcellular location is the cell membrane. The protein resides in the cytoplasm. The protein localises to the cytoskeleton. ROP effector binding specifically activated ROPs and linking them to the microtubule cytoskeleton. Involved in ROP-regulated polar growth. Involved in local disassembly of cortical microtubules when associated with ARAC10 and KIN13A and conversely also mediates the elimination of ARAC10 from the plasma membrane by the cortical microtubules. Accumulates at the plus end of shrinking microtubules. Targets KIN13A to microtubules. The polypeptide is Interactor of constitutive active ROPs 5 (ICR5) (Arabidopsis thaliana (Mouse-ear cress)).